The following is a 268-amino-acid chain: Esterase PIR7B (268 aa).

Catalysis depends on Ser86, which acts as the Acyl-ester intermediate. Catalysis depends on charge relay system residues Asp218 and His246.

Belongs to the AB hydrolase superfamily.

Functionally, exhibits esterase activity towards naphthol AS-acetate in vitro. The polypeptide is Esterase PIR7B (PIR7B) (Oryza sativa subsp. japonica (Rice)).